Consider the following 622-residue polypeptide: ATP-dependent lipid A-core flippase (622 aa).

5 consecutive transmembrane segments (helical) span residues 32 to 52 (IVAALIAIFGVAATESYLAAF), 91 to 111 (VWGTENKIWTVPLFLIILVVI), 192 to 212 (IVLLYLNWQLSLIVVLMFPLL), 286 to 306 (SPFSELIASIALAVVIFIALW), and 312 to 332 (YTTIGEFMAFIVAMLQMYAPI). In terms of domain architecture, ABC transmembrane type-1 spans 33–344 (VAALIAIFGV…LANISIPMQT (312 aa)). One can recognise an ABC transporter domain in the interval 378-611 (FRNVDVEYRS…NGYYTMLRNI (234 aa)). 410 to 417 (GRSGSGKS) contacts ATP.

This sequence belongs to the ABC transporter superfamily. Lipid exporter (TC 3.A.1.106) family. As to quaternary structure, homodimer.

It localises to the cell inner membrane. The catalysed reaction is ATP + H2O + lipid A-core oligosaccharideSide 1 = ADP + phosphate + lipid A-core oligosaccharideSide 2.. Involved in lipopolysaccharide (LPS) biosynthesis. Translocates lipid A-core from the inner to the outer leaflet of the inner membrane. Transmembrane domains (TMD) form a pore in the inner membrane and the ATP-binding domain (NBD) is responsible for energy generation. The protein is ATP-dependent lipid A-core flippase of Neisseria gonorrhoeae (strain ATCC 700825 / FA 1090).